The chain runs to 258 residues: Glutamate racemase (258 aa).

Substrate-binding positions include 11 to 12 (DS) and 43 to 44 (YG). The Proton donor/acceptor role is filled by Cys74. Residue 75–76 (NT) coordinates substrate. The Proton donor/acceptor role is filled by Cys187. Residue 188–189 (TH) participates in substrate binding.

This sequence belongs to the aspartate/glutamate racemases family.

It carries out the reaction L-glutamate = D-glutamate. It functions in the pathway cell wall biogenesis; peptidoglycan biosynthesis. In terms of biological role, provides the (R)-glutamate required for cell wall biosynthesis. This Bifidobacterium adolescentis (strain ATCC 15703 / DSM 20083 / NCTC 11814 / E194a) protein is Glutamate racemase.